A 319-amino-acid polypeptide reads, in one-letter code: Multivesicular body subunit 12B (319 aa).

The disordered stretch occupies residues 1–50; that stretch reads MRSCFCVRRSRDPPPPQPPPPPPQRGTDQSTMPEVKDLSEALPETSMDPI. The span at 13–24 shows a compositional bias: pro residues; that stretch reads PPPPQPPPPPPQ. 2 positions are modified to phosphoserine: S46 and S101. Positions 47–193 constitute an MABP domain; the sequence is MDPITGVGVV…SMGIWYRMGR (147 aa). 3 positions are modified to phosphothreonine: T122, T204, and T205. Residues 195–222 form a disordered region; the sequence is PRNHDSSQPTTPSQSSAASTPAPNLPRH. Positions 200-216 are enriched in low complexity; that stretch reads SSQPTTPSQSSAASTPA. S224 bears the Phosphoserine mark. Residues 254–303 form the UMA domain; it reads MDGVPFMISEKFSCVPESMQPFDLLGITIKSLAEIEKEYEYSFRTEQSAA. The interval 299–319 is disordered; it reads EQSAAARLPPSPTRCQQIPQS. S309 is subject to Phosphoserine.

It belongs to the MVB12 family. In terms of assembly, component of the ESCRT-I complex (endosomal sorting complex required for transport I) which consists of TSG101, VPS28, a VPS37 protein (VPS37A to -D) and MVB12A or MVB12B in a 1:1:1:1 stoichiometry. Interacts with TSG101; the association appears to be mediated by the TSG101-VPS37 binary subcomplex. Interacts with VPS28. Interacts with VPS37B; the association appears to be mediated by the TSG101-VPS37 binary subcomplex. Interacts with VPS37C; the association appears to be mediated by the TSG101-VPS37 binary subcomplex.

Its subcellular location is the endosome. It localises to the late endosome membrane. In terms of biological role, component of the ESCRT-I complex, a regulator of vesicular trafficking process. Required for the sorting of endocytic ubiquitinated cargos into multivesicular bodies. The protein is Multivesicular body subunit 12B (MVB12B) of Homo sapiens (Human).